Consider the following 350-residue polypeptide: UDP-glucose 4-epimerase GEPI48 (350 aa).

5–36 (TVLVTGGAGYIGSHTVLQLLLGGFKAVVVDNL) contacts NAD(+). Position 130 (S130) interacts with substrate. Y154 serves as the catalytic Proton acceptor.

This sequence belongs to the NAD(P)-dependent epimerase/dehydratase family. Requires NAD(+) as cofactor.

It carries out the reaction UDP-alpha-D-glucose = UDP-alpha-D-galactose. Its pathway is carbohydrate metabolism; galactose metabolism. The protein is UDP-glucose 4-epimerase GEPI48 of Cyamopsis tetragonoloba (Guar).